Consider the following 314-residue polypeptide: MKETVGNKIVLIGAGDVGVAYAYALINQGMADHLAIIDIDEKKLEGNVMDLNHGVVWADSRTRVTKGTYADCEDAAMVVICAGAAQKPGETRLQLVDKNVKIMKSIVGDVMDSGFDGIFLVASNPVDILTYAVWKFSGLEWNRVIGSGTVLDSARFRYMLGELYEVAPSSVHAYIIGEHGDTELPVLSSATIAGVSLSRMLDKDPELEGRLEKIFEDTRDAAYHIIDAKGSTSYGIGMGLARITRAILQNQDVAVPVSALLHGEYGEEDIYIGTPAVVNRRGIRRVVELEITDHEMERFKHSANTLREIQKQFF.

NAD(+)-binding positions include Val-17, Asp-38, Lys-43, Tyr-69, and 83–84 (GA). Residues Gln-86 and Arg-92 each contribute to the substrate site. Residues Ser-105, 122 to 124 (ASN), and Ser-147 contribute to the NAD(+) site. 124–127 (NPVD) provides a ligand contact to substrate. Residue 152-155 (DSAR) participates in substrate binding. Arg-157 and His-172 together coordinate beta-D-fructose 1,6-bisphosphate. His-179 functions as the Proton acceptor in the catalytic mechanism. Position 223 is a phosphotyrosine (Tyr-223). Thr-232 contributes to the substrate binding site.

This sequence belongs to the LDH/MDH superfamily. LDH family. In terms of assembly, homotetramer.

It is found in the cytoplasm. The catalysed reaction is (S)-lactate + NAD(+) = pyruvate + NADH + H(+). It participates in fermentation; pyruvate fermentation to lactate; (S)-lactate from pyruvate: step 1/1. With respect to regulation, allosterically activated by fructose 1,6-bisphosphate (FBP). In terms of biological role, catalyzes the conversion of lactate to pyruvate. The polypeptide is L-lactate dehydrogenase (Corynebacterium glutamicum (strain ATCC 13032 / DSM 20300 / JCM 1318 / BCRC 11384 / CCUG 27702 / LMG 3730 / NBRC 12168 / NCIMB 10025 / NRRL B-2784 / 534)).